The following is a 372-amino-acid chain: L-selectin (372 aa).

The N-terminal stretch at 1–28 is a signal peptide; that stretch reads MVFPWRCEGTYWGSRNILKLWVWTLLCC. Residues 29–38 constitute a propeptide that is removed on maturation; that stretch reads DFLIHHGTHC. The Extracellular segment spans residues 39 to 332; the sequence is WTYHYSEKPM…FSKIKEGDYN (294 aa). A C-type lectin domain is found at 55–155; it reads KFCKQNYTDL…ACHKRKAALC (101 aa). 10 disulfides stabilise this stretch: cysteine 57–cysteine 155, cysteine 128–cysteine 147, cysteine 128–cysteine 160, cysteine 160–cysteine 171, cysteine 165–cysteine 180, cysteine 182–cysteine 191, cysteine 197–cysteine 241, cysteine 227–cysteine 254, cysteine 259–cysteine 303, and cysteine 289–cysteine 316. Asparagine 60 and asparagine 104 each carry an N-linked (GlcNAc...) asparagine glycan. Residues glutamate 118, asparagine 120, glutamate 126, asparagine 143, and aspartate 144 each coordinate Ca(2+). Residues 156-192 form the EGF-like domain; it reads YTASCQPGSCNGRGECVETINNHTCICDAGYYGPQCQ. Asparagine 177 carries an N-linked (GlcNAc...) asparagine glycan. Sushi domains lie at 195–256 and 257–318; these read VQCE…ICQV and VQCE…ICQE. Asparagine 216, asparagine 226, asparagine 246, asparagine 278, asparagine 288, asparagine 308, and asparagine 320 each carry an N-linked (GlcNAc...) asparagine glycan. Residues 333 to 355 traverse the membrane as a helical segment; the sequence is PLFIPVAVMVTAFSGLAFLIWLA. Residues 356-372 lie on the Cytoplasmic side of the membrane; sequence RRLKKGKKSQERMDDPY.

It belongs to the selectin/LECAM family. Interaction with SELPLG/PSGL1 and PODXL2 is required for promoting recruitment and rolling of leukocytes. This interaction is dependent on the sialyl Lewis X glycan modification of SELPLG and PODXL2, and tyrosine sulfation modifications of SELPLG. Sulfation on 'Tyr-51' of SELPLG is important for L-selectin binding. N-glycosylated. As to expression, predominantly expressed in lymphoid tissue.

Its subcellular location is the cell membrane. Calcium-dependent lectin that mediates cell adhesion by binding to glycoproteins on neighboring cells. Mediates the adherence of lymphocytes to endothelial cells of high endothelial venules in peripheral lymph nodes. Promotes initial tethering and rolling of leukocytes in endothelia. This is L-selectin (Sell) from Mus musculus (Mouse).